Reading from the N-terminus, the 446-residue chain is Keratin, type I cytoskeletal 25 (446 aa).

The disordered stretch occupies residues 1 to 20 (MSLRLSSGSKRSYARPSTGS). Residues 1–74 (MSLRLSSGSK…VNEGGLLSGN (74 aa)) form a head region. The coil 1A stretch occupies residues 75-110 (EKVTMQNLNDRLASYLDNVQALQEANADLEQKIKGW). The IF rod domain occupies 75–390 (EKVTMQNLND…LLIGGDEGAC (316 aa)). Positions 111 to 132 (YEKFGPGSCRGLDHDYSRYFPI) are linker 1. Residues 133-224 (IDDLKNQIIT…KNHKEEMQAL (92 aa)) form a coil 1B region. The tract at residues 225–247 (QCAAGGNVNVEMNAAPGVDLTVL) is linker 12. Positions 248–386 (LNNMRAEYEA…ETYCLLIGGD (139 aa)) are coil 2. The segment at 387–446 (EGACKSSSYKSKDYTSGNAGNQSKDSPKAIVVKKVLEEVDQRSKILTTRLHSLEEKSQSN) is tail. The disordered stretch occupies residues 394 to 413 (SYKSKDYTSGNAGNQSKDSP). The segment covering 400–410 (YTSGNAGNQSK) has biased composition (polar residues). Serine 438 bears the Phosphoserine mark.

This sequence belongs to the intermediate filament family. Heterodimer of a type I and a type II keratin. Heterodimer with type II keratin KRT5 leading to the formation of keratin intermediate filament (KIF) network. Interacts with KRT6A to form filaments.

Its subcellular location is the cytoplasm. Functionally, essential for the proper assembly of type I and type II keratin protein complexes and formation of keratin intermediate filaments in the inner root sheath (irs). Plays a role in the cytoskeleton organization. The chain is Keratin, type I cytoskeletal 25 from Rattus norvegicus (Rat).